A 398-amino-acid chain; its full sequence is Beta-1,4-galactosyltransferase 1 (398 aa).

Residues 1–24 (MRLREPLLSGSAAMPGASLQRACR) lie on the Cytoplasmic side of the membrane. The helical; Signal-anchor for type II membrane protein transmembrane segment at 25–44 (LLVAVCALHLGVTLVYYLAG) threads the bilayer. At 45-398 (RDLSRLPQLV…QITVDIGTPS (354 aa)) the chain is on the lumenal side. Residues 61-76 (QGGSNSAAAIGQSSGE) show a composition bias toward polar residues. Residues 61–117 (QGGSNSAAAIGQSSGELRTGGARPPPPLGASSQPRPGGDSSPVVDSGPGPASNLTSV) are disordered. N-linked (GlcNAc...) asparagine glycosylation is present at Asn113. A disulfide bridge connects residues Cys130 and Cys172. Residues 183–187 (PFRNR), 222–224 (FNR), 249–250 (VD), and Trp310 contribute to the UDP-alpha-D-galactose site. A disulfide bond links Cys243 and Cys262. Mn(2+) is bound at residue Asp250. An N-acetyl-D-glucosamine-binding site is contributed by 312–315 (GEDD). Residue His343 coordinates Mn(2+). 343-346 (HSRD) is a UDP-alpha-D-galactose binding site. Arg355 serves as a coordination point for N-acetyl-D-glucosamine.

Belongs to the glycosyltransferase 7 family. As to quaternary structure, homodimer; and heterodimer with alpha-lactalbumin to form lactose synthase. Interacts (via N-terminal cytoplasmic domain) with UBE2Q1 (via N-terminus); the interaction is direct. Mn(2+) serves as cofactor. In terms of processing, the soluble form derives from the membrane forms by proteolytic processing. In terms of tissue distribution, ubiquitously expressed, but at very low levels in fetal and adult brain.

It localises to the golgi apparatus. The protein localises to the golgi stack membrane. It is found in the cell membrane. Its subcellular location is the cell surface. The protein resides in the cell projection. It localises to the filopodium. The protein localises to the secreted. The catalysed reaction is D-glucose + UDP-alpha-D-galactose = lactose + UDP + H(+). It catalyses the reaction an N-acetyl-beta-D-glucosaminyl derivative + UDP-alpha-D-galactose = a beta-D-galactosyl-(1-&gt;4)-N-acetyl-beta-D-glucosaminyl derivative + UDP + H(+). The enzyme catalyses N-acetyl-D-glucosamine + UDP-alpha-D-galactose = beta-D-galactosyl-(1-&gt;4)-N-acetyl-D-glucosamine + UDP + H(+). It carries out the reaction a beta-D-GlcNAc-(1-&gt;3)-beta-D-Gal-(1-&gt;4)-beta-D-Glc-(1&lt;-&gt;1)-Cer(d18:1(4E)) + UDP-alpha-D-galactose = a neolactoside nLc4Cer(d18:1(4E)) + UDP + H(+). The catalysed reaction is a beta-D-glucosylceramide + UDP-alpha-D-galactose = a beta-D-galactosyl-(1-&gt;4)-beta-D-glucosyl-(1&lt;-&gt;1)-ceramide + UDP + H(+). It catalyses the reaction a neolactoside IV(3)-beta-GlcNAc-nLc4Cer + UDP-alpha-D-galactose = a neolactoside nLc6Cer + UDP + H(+). It functions in the pathway protein modification; protein glycosylation. Its function is as follows. The Golgi complex form catalyzes the production of lactose in the lactating mammary gland and could also be responsible for the synthesis of complex-type N-linked oligosaccharides in many glycoproteins as well as the carbohydrate moieties of glycolipids. In terms of biological role, the cell surface form functions as a recognition molecule during a variety of cell to cell and cell to matrix interactions, as those occurring during development and egg fertilization, by binding to specific oligosaccharide ligands on opposing cells or in the extracellular matrix. This Homo sapiens (Human) protein is Beta-1,4-galactosyltransferase 1.